A 386-amino-acid polypeptide reads, in one-letter code: Succinate--CoA ligase [ADP-forming] subunit beta (386 aa).

One can recognise an ATP-grasp domain in the interval 9 to 244 (KEILRKYGVP…HDEEDPLETR (236 aa)). ATP contacts are provided by residues K46, 53-55 (GRG), E99, C102, and E107. Mg(2+)-binding residues include N199 and D213. Residues N264 and 321–323 (GIM) contribute to the substrate site.

It belongs to the succinate/malate CoA ligase beta subunit family. In terms of assembly, heterotetramer of two alpha and two beta subunits. The cofactor is Mg(2+).

The catalysed reaction is succinate + ATP + CoA = succinyl-CoA + ADP + phosphate. It catalyses the reaction GTP + succinate + CoA = succinyl-CoA + GDP + phosphate. Its pathway is carbohydrate metabolism; tricarboxylic acid cycle; succinate from succinyl-CoA (ligase route): step 1/1. In terms of biological role, succinyl-CoA synthetase functions in the citric acid cycle (TCA), coupling the hydrolysis of succinyl-CoA to the synthesis of either ATP or GTP and thus represents the only step of substrate-level phosphorylation in the TCA. The beta subunit provides nucleotide specificity of the enzyme and binds the substrate succinate, while the binding sites for coenzyme A and phosphate are found in the alpha subunit. The chain is Succinate--CoA ligase [ADP-forming] subunit beta from Rickettsia massiliae (strain Mtu5).